The primary structure comprises 249 residues: Probable transcriptional regulatory protein Minf_0651 (249 aa).

It belongs to the TACO1 family.

The protein resides in the cytoplasm. This is Probable transcriptional regulatory protein Minf_0651 from Methylacidiphilum infernorum (isolate V4) (Methylokorus infernorum (strain V4)).